The primary structure comprises 408 residues: Succinylornithine transaminase (408 aa).

At Lys252 the chain carries N6-(pyridoxal phosphate)lysine.

It belongs to the class-III pyridoxal-phosphate-dependent aminotransferase family. AstC subfamily. Pyridoxal 5'-phosphate is required as a cofactor.

The catalysed reaction is N(2)-succinyl-L-ornithine + 2-oxoglutarate = N-succinyl-L-glutamate 5-semialdehyde + L-glutamate. Its pathway is amino-acid degradation; L-arginine degradation via AST pathway; L-glutamate and succinate from L-arginine: step 3/5. Functionally, catalyzes the transamination of N(2)-succinylornithine and alpha-ketoglutarate into N(2)-succinylglutamate semialdehyde and glutamate. Can also act as an acetylornithine aminotransferase. The polypeptide is Succinylornithine transaminase (Salmonella newport (strain SL254)).